The primary structure comprises 320 residues: Cytochrome f (320 aa).

The N-terminal stretch at Met-1–Ala-35 is a signal peptide. Heme-binding residues include Tyr-36, Cys-56, Cys-59, and His-60. Residues Val-286 to Lys-306 form a helical membrane-spanning segment.

This sequence belongs to the cytochrome f family. As to quaternary structure, the 4 large subunits of the cytochrome b6-f complex are cytochrome b6, subunit IV (17 kDa polypeptide, petD), cytochrome f and the Rieske protein, while the 4 small subunits are PetG, PetL, PetM and PetN. The complex functions as a dimer. It depends on heme as a cofactor.

The protein resides in the plastid. It localises to the chloroplast thylakoid membrane. Component of the cytochrome b6-f complex, which mediates electron transfer between photosystem II (PSII) and photosystem I (PSI), cyclic electron flow around PSI, and state transitions. This Cycas taitungensis (Prince sago) protein is Cytochrome f.